Reading from the N-terminus, the 244-residue chain is Purine nucleoside phosphorylase HI_0175 (244 aa).

Zn(2+) is bound by residues histidine 70, cysteine 105, and histidine 122.

The protein belongs to the purine nucleoside phosphorylase YfiH/LACC1 family. In terms of assembly, homodimer. Cu(2+) is required as a cofactor. The cofactor is Zn(2+).

The enzyme catalyses adenosine + phosphate = alpha-D-ribose 1-phosphate + adenine. It carries out the reaction S-methyl-5'-thioadenosine + phosphate = 5-(methylsulfanyl)-alpha-D-ribose 1-phosphate + adenine. It catalyses the reaction inosine + phosphate = alpha-D-ribose 1-phosphate + hypoxanthine. The catalysed reaction is adenosine + H2O + H(+) = inosine + NH4(+). In terms of biological role, purine nucleoside enzyme that catalyzes the phosphorolysis of adenosine and inosine nucleosides, yielding D-ribose 1-phosphate and the respective free bases, adenine and hypoxanthine. Also catalyzes the phosphorolysis of S-methyl-5'-thioadenosine into adenine and S-methyl-5-thio-alpha-D-ribose 1-phosphate. Also has adenosine deaminase activity. The sequence is that of Purine nucleoside phosphorylase HI_0175 from Haemophilus influenzae (strain ATCC 51907 / DSM 11121 / KW20 / Rd).